We begin with the raw amino-acid sequence, 620 residues long: mRNA cap guanine-N(7) methyltransferase (620 aa).

2 disordered regions span residues 1 to 176 (MLPP…APSS) and 193 to 304 (AHAN…DDEY). Residues 29-44 (RSPSMSLSPRSQNQSL) show a composition bias toward polar residues. Low complexity-rich tracts occupy residues 45-60 (PYPSSRPGSAAGSAHP) and 136-157 (PQPTTTPSSPSTSQHTPYTPHH). In terms of domain architecture, mRNA cap 0 methyltransferase spans 345–620 (SPIIGLKKFN…LYMGFAFEKM (276 aa)). 354–355 (NN) lines the mRNA pocket. The S-adenosyl-L-methionine site is built by lysine 358, glycine 377, aspartate 399, aspartate 428, glutamine 454, and tyrosine 459.

This sequence belongs to the class I-like SAM-binding methyltransferase superfamily. mRNA cap 0 methyltransferase family.

Its subcellular location is the nucleus. It catalyses the reaction a 5'-end (5'-triphosphoguanosine)-ribonucleoside in mRNA + S-adenosyl-L-methionine = a 5'-end (N(7)-methyl 5'-triphosphoguanosine)-ribonucleoside in mRNA + S-adenosyl-L-homocysteine. In terms of biological role, responsible for methylating the 5'-cap structure of mRNAs. This chain is mRNA cap guanine-N(7) methyltransferase (ABD1), found in Cryptococcus neoformans var. neoformans serotype D (strain JEC21 / ATCC MYA-565) (Filobasidiella neoformans).